We begin with the raw amino-acid sequence, 54 residues long: UPF0391 membrane protein BMEI0373 (54 aa).

Helical transmembrane passes span 5–25 (VLVF…GIAG) and 29–48 (GIAQ…SLIA).

The protein belongs to the UPF0391 family.

It is found in the cell membrane. In Brucella melitensis biotype 1 (strain ATCC 23456 / CCUG 17765 / NCTC 10094 / 16M), this protein is UPF0391 membrane protein BMEI0373.